A 192-amino-acid polypeptide reads, in one-letter code: Crossover junction endodeoxyribonuclease RuvC (192 aa).

Catalysis depends on residues Asp-20, Glu-80, and Asp-153. Mg(2+)-binding residues include Asp-20, Glu-80, and Asp-153.

This sequence belongs to the RuvC family. Homodimer which binds Holliday junction (HJ) DNA. The HJ becomes 2-fold symmetrical on binding to RuvC with unstacked arms; it has a different conformation from HJ DNA in complex with RuvA. In the full resolvosome a probable DNA-RuvA(4)-RuvB(12)-RuvC(2) complex forms which resolves the HJ. It depends on Mg(2+) as a cofactor.

The protein resides in the cytoplasm. It catalyses the reaction Endonucleolytic cleavage at a junction such as a reciprocal single-stranded crossover between two homologous DNA duplexes (Holliday junction).. In terms of biological role, the RuvA-RuvB-RuvC complex processes Holliday junction (HJ) DNA during genetic recombination and DNA repair. Endonuclease that resolves HJ intermediates. Cleaves cruciform DNA by making single-stranded nicks across the HJ at symmetrical positions within the homologous arms, yielding a 5'-phosphate and a 3'-hydroxyl group; requires a central core of homology in the junction. The consensus cleavage sequence is 5'-(A/T)TT(C/G)-3'. Cleavage occurs on the 3'-side of the TT dinucleotide at the point of strand exchange. HJ branch migration catalyzed by RuvA-RuvB allows RuvC to scan DNA until it finds its consensus sequence, where it cleaves and resolves the cruciform DNA. This is Crossover junction endodeoxyribonuclease RuvC from Christiangramia forsetii (strain DSM 17595 / CGMCC 1.15422 / KT0803) (Gramella forsetii).